Reading from the N-terminus, the 181-residue chain is MTASESFVGMQVLAQDKEVKATFIALDRKLPANLKVPYMKNAKYRTCICPSSNHLVDDCVCEDVIIAYTAHRNNAVAALLYSDGNVIHRSGTLKPKSQNRFDLRGFLTSVNPGESSRNEAGASKSTQKTYDRKDKSPSKSRNSKKGAKKSSSARKKKEYSSNSETDLSSDSDANTRKSKRK.

The tract at residues 106-181 (FLTSVNPGES…DANTRKSKRK (76 aa)) is disordered. Residues 141–157 (RNSKKGAKKSSSARKKK) show a composition bias toward basic residues. Over residues 160-172 (SSNSETDLSSDSD) the composition is skewed to low complexity.

It belongs to the phytoreovirus RNA-binding protein family.

It localises to the host cytoplasm. Constituent of viral factories. Binds to ssRNA and dsRNA. The sequence is that of RNA-binding protein from Rice dwarf virus (isolate Akita) (RDV).